A 234-amino-acid chain; its full sequence is Proteasome subunit alpha type-2 (234 aa).

Position 2 is an N-acetylalanine (A2). Y6 carries the post-translational modification Phosphotyrosine. 3 positions are modified to phosphoserine: S7, S14, and S16. At Y24 the chain carries Phosphotyrosine. K70 is subject to N6-acetyllysine. Y76 and Y121 each carry phosphotyrosine. Position 171 is an N6-acetyllysine (K171).

It belongs to the peptidase T1A family. In terms of assembly, the 26S proteasome consists of a 20S proteasome core and two 19S regulatory subunits. The 20S proteasome core is a barrel-shaped complex made of 28 subunits that are arranged in four stacked rings. The two outer rings are each formed by seven alpha subunits, and the two inner rings are formed by seven beta subunits. The proteolytic activity is exerted by three beta-subunits PSMB5, PSMB6 and PSMB7. Phosphorylated on tyrosine residues; which may be important for nuclear import. As to expression, detected in liver (at protein level).

The protein resides in the cytoplasm. The protein localises to the nucleus. Its function is as follows. Component of the 20S core proteasome complex involved in the proteolytic degradation of most intracellular proteins. This complex plays numerous essential roles within the cell by associating with different regulatory particles. Associated with two 19S regulatory particles, forms the 26S proteasome and thus participates in the ATP-dependent degradation of ubiquitinated proteins. The 26S proteasome plays a key role in the maintenance of protein homeostasis by removing misfolded or damaged proteins that could impair cellular functions, and by removing proteins whose functions are no longer required. Associated with the PA200 or PA28, the 20S proteasome mediates ubiquitin-independent protein degradation. This type of proteolysis is required in several pathways including spermatogenesis (20S-PA200 complex) or generation of a subset of MHC class I-presented antigenic peptides (20S-PA28 complex). This Mus musculus (Mouse) protein is Proteasome subunit alpha type-2 (Psma2).